Consider the following 739-residue polypeptide: Catalase-peroxidase (739 aa).

A signal peptide spans 1-23; sequence MLKKIVTALGMSGMLLASNSAIA. A cross-link (tryptophyl-tyrosyl-methioninium (Trp-Tyr) (with M-247)) is located at residues 100–221; it reads WHDAGTYRIY…YAATQMGLIY (122 aa). Histidine 101 (proton acceptor) is an active-site residue. The tryptophyl-tyrosyl-methioninium (Tyr-Met) (with W-100) cross-link spans 221–247; that stretch reads YVNPEGPDGKPDIKGAASEIRQAFRAM. Histidine 262 is a heme b binding site.

It belongs to the peroxidase family. Peroxidase/catalase subfamily. As to quaternary structure, homodimer or homotetramer. Requires heme b as cofactor. In terms of processing, formation of the three residue Trp-Tyr-Met cross-link is important for the catalase, but not the peroxidase activity of the enzyme.

It catalyses the reaction H2O2 + AH2 = A + 2 H2O. The catalysed reaction is 2 H2O2 = O2 + 2 H2O. In terms of biological role, bifunctional enzyme with both catalase and broad-spectrum peroxidase activity. The chain is Catalase-peroxidase from Francisella tularensis subsp. novicida (strain U112).